Consider the following 848-residue polypeptide: Beta-galactosidase 11 (848 aa).

Residues 1–23 (MSAAAVLAVVAAAVAALAAAASG) form the signal peptide. Residue Asn-29 is glycosylated (N-linked (GlcNAc...) asparagine). Glu-189 serves as the catalytic Proton donor. Glu-260 (nucleophile) is an active-site residue. N-linked (GlcNAc...) asparagine glycosylation is found at Asn-261, Asn-472, and Asn-783. The 88-residue stretch at 750–837 (GGLKPTAVLS…GTLAVQAKCS (88 aa)) folds into the SUEL-type lectin domain.

The protein belongs to the glycosyl hydrolase 35 family.

It localises to the secreted. Its subcellular location is the extracellular space. It is found in the apoplast. The enzyme catalyses Hydrolysis of terminal non-reducing beta-D-galactose residues in beta-D-galactosides.. The polypeptide is Beta-galactosidase 11 (Oryza sativa subsp. japonica (Rice)).